Consider the following 445-residue polypeptide: MANVVVIGAQWGDEGKGKITDLLSKSADVVVRYQGGVNAGHTVVVNGQTLKLHLIPSGILYPDTECIIGSGTVIDPEVLIQELDQLKLLGVSTANLLISETAHVTMPYHRLIDRAAEELRGSHRIGTTGRGIGPTYADKSERTGIRILDLMDATTLQEQLRWAVNHKNVLLEKMYGLPPYDPAEIIAEYLTYAERLRPHVVDCSLKISDAVRRRRNILFEGAQGTLLDLDHGTYPYVTSSNPVAGGACVGAGVGPTMIDRVIGVAKAYTTRVGEGPFPTELTDQLGELLCDRGAEFGTTTGRKRRCGWFDAVIGRYAVRINGLDCLAITKLDVLDQLDEIKVCVAYEIDGERCEDFPNARRFARCQPIYETLPGWKQPTDHCRSLEDLPPQALNYLKFLAEIMEVPIAIVSLGAERHQTIIVEDPIHGPKRALLPASPVPVPKIA.

Residues 12–18 and 40–42 each bind GTP; these read GDEGKGK and GHT. Aspartate 13 (proton acceptor) is an active-site residue. Mg(2+)-binding residues include aspartate 13 and glycine 40. IMP contacts are provided by residues 13-16, 38-41, threonine 128, arginine 142, glutamine 223, threonine 238, and arginine 302; these read DEGK and NAGH. Catalysis depends on histidine 41, which acts as the Proton donor. 298-304 lines the substrate pocket; it reads TTTGRKR. GTP contacts are provided by residues arginine 304, 330–332, and 411–413; these read KLD and SLG.

The protein belongs to the adenylosuccinate synthetase family. Homodimer. Mg(2+) serves as cofactor.

It localises to the cytoplasm. The enzyme catalyses IMP + L-aspartate + GTP = N(6)-(1,2-dicarboxyethyl)-AMP + GDP + phosphate + 2 H(+). It participates in purine metabolism; AMP biosynthesis via de novo pathway; AMP from IMP: step 1/2. Its function is as follows. Plays an important role in the de novo pathway of purine nucleotide biosynthesis. Catalyzes the first committed step in the biosynthesis of AMP from IMP. The sequence is that of Adenylosuccinate synthetase from Cyanothece sp. (strain PCC 7425 / ATCC 29141).